Here is a 494-residue protein sequence, read N- to C-terminus: PIGF/3-ketodihydrosphingosine reductase fusion protein (494 aa).

Residues Gly20, Ser22, and Gly24 each contribute to the NADPH site. The GXSXG signature appears at Gly20–Gly24. Leu25 is a binding site for NADP(+). 2 residues coordinate NADPH: Arg45 and Lys49. Residue Val54 coordinates NADP(+). Positions 74 and 75 each coordinate NADPH. Residues Ile148–Pro168 form a helical membrane-spanning segment. Residues Tyr166, Lys170, and Ile199 each coordinate NADP(+). Tyr166 serves as the catalytic Proton acceptor. Lys170 acts as the Lowers pKa of active site Tyr in catalysis. The next 6 helical transmembrane spans lie at His264–Tyr284, Ile312–Leu332, Leu370–Phe390, Tyr402–Phe422, Leu444–Trp464, and Ile473–Leu493.

It in the N-terminal section; belongs to the short-chain dehydrogenases/reductases (SDR) family. This sequence in the C-terminal section; belongs to the PIGF family.

The protein localises to the endoplasmic reticulum membrane. The enzyme catalyses sphinganine + NADP(+) = 3-oxosphinganine + NADPH + H(+). The protein operates within glycolipid biosynthesis; glycosylphosphatidylinositol-anchor biosynthesis. Its pathway is lipid metabolism; sphingolipid metabolism. Its function is as follows. Acts in the GPI biosynthetic pathway between GlcNAc-PI synthesis and GPI transfer to protein. Required for the formation of complete GPI precursors CP1 and CP2. Catalyzes the reduction of 3'-oxosphinganine (3-ketodihydrosphingosine/KDS) to sphinganine (dihydrosphingosine/DHS), the second step of de novo sphingolipid biosynthesis. The sequence is that of PIGF/3-ketodihydrosphingosine reductase fusion protein from Schizosaccharomyces pombe (strain 972 / ATCC 24843) (Fission yeast).